The sequence spans 432 residues: RNA binding protein fox-1 homolog 2 (432 aa).

Over residues 1–21 (MAEGGQAQQQPPQLGPGAAAR) the composition is skewed to low complexity. The segment at 1-169 (MAEGGQAQQQ…STPKRLHVSN (169 aa)) is disordered. 2 stretches are compositionally biased toward polar residues: residues 60 to 69 (QGNQEPTTTP) and 101 to 121 (YAGQ…PHGE). Over residues 122 to 159 (QSSNSPSNQNGSLTQTEGGAQTDGQQSQTQSSENSESK) the composition is skewed to low complexity. Residues 163 to 239 (KRLHVSNIPF…RKIEVNNATA (77 aa)) form the RRM domain. Arginine 323 carries the omega-N-methylarginine modification. Asymmetric dimethylarginine occurs at positions 339 and 371. 2 positions are modified to asymmetric dimethylarginine; alternate: arginine 423 and arginine 428. Omega-N-methylarginine; alternate is present on residues arginine 423 and arginine 428.

As to quaternary structure, interacts with ER-alpha N-terminal activation domain. Interacts with RBPMS; the interaction allows cooperative assembly of stable cell-specific alternative splicing regulatory complexes.

The protein resides in the nucleus. It localises to the cytoplasm. RNA-binding protein that regulates alternative splicing events by binding to 5'-UGCAUGU-3' elements. Prevents binding of U2AF2 to the 3'-splice site. Regulates alternative splicing of tissue-specific exons and of differentially spliced exons during erythropoiesis. Seems to act as a coregulatory factor of ER-alpha. Together with RNA binding proteins RBPMS and MBNL1/2, activates vascular smooth muscle cells alternative splicing events. The chain is RNA binding protein fox-1 homolog 2 (Rbfox2) from Rattus norvegicus (Rat).